The chain runs to 219 residues: Phosphatidylinositol phosphate synthase (219 aa).

29 to 32 serves as a coordination point for a CDP-1,2-diacyl-sn-glycerol; the sequence is NQLT. The next 2 helical transmembrane spans lie at 31 to 47 and 53 to 72; these read LTLVSAGLTVGVALLLI and IWAAVLTGLFAAFDMIDGTV. Positions 66 and 69 each coordinate Mg(2+). Residues Gly70, Arg74, and Thr80 each contribute to the a CDP-1,2-diacyl-sn-glycerol site. Positions 87 and 91 each coordinate Mg(2+). The active-site Proton acceptor is Asp91. Transmembrane regions (helical) follow at residues 93–110, 116–133, 154–171, and 177–194; these read ITDGALFGAITWWLVYSY, LVAASLVCLVASQVISYV, RLIVSLVGLGLTGMGVPY, and LWALAAGSIYTVVQRLVM.

Belongs to the CDP-alcohol phosphatidyltransferase class-I family. Homodimer. It depends on Mg(2+) as a cofactor.

It localises to the cell membrane. It carries out the reaction a CDP-1,2-diacyl-sn-glycerol + 1D-myo-inositol 3-phosphate = a 1,2-diacyl-sn-glycero-3-phospho-(1D-myo-inositol-3-phosphate) + CMP + H(+). The enzyme catalyses 1,2-di-(9Z-octadecenoyl)-sn-glycero-3-cytidine-5'-diphosphate + 1D-myo-inositol 3-phosphate = 1,2-di-(9Z-octadecenoyl)-sn-glycero-3-phospho-(1D-myo-inositol-3-phosphate) + CMP + H(+). Its pathway is phospholipid metabolism; phosphatidylinositol phosphate biosynthesis. Catalyzes the conjugation of the 1'-hydroxyl group of D-myo-inositol-3-phosphate (also named L-myo-inositol-1-phosphate) with a lipid tail of cytidine diphosphate diacylglycerol (CDP-DAG), forming phosphatidylinositol phosphate (PIP) and CMP. PIP is a precursor of phosphatidylinositol (PI) which is an essential lipid required for cell wall formation. In Corynebacterium glutamicum (strain ATCC 13032 / DSM 20300 / JCM 1318 / BCRC 11384 / CCUG 27702 / LMG 3730 / NBRC 12168 / NCIMB 10025 / NRRL B-2784 / 534), this protein is Phosphatidylinositol phosphate synthase.